The primary structure comprises 490 residues: NADP-reducing hydrogenase subunit HndC (490 aa).

2 4Fe-4S ferredoxin-type domains span residues 433 to 462 and 463 to 490; these read LTYTIDPAKCTGCGLCTRVCPVECISGTKK and QPHTIDTTRCIKCGACYDKCKFDSIIKQ.

The protein belongs to the complex I 51 kDa subunit family. In terms of assembly, heterotetramer composed of HndA, HndB, HndC and HndD subunits. HndC is probably the reducing subunit.

The catalysed reaction is H2 + NADP(+) = NADPH + H(+). With respect to regulation, inhibited by oxygen. In terms of biological role, catalyzes the reduction of NADP in the presence of molecular H2 to yield NADPH. In Solidesulfovibrio fructosivorans (Desulfovibrio fructosivorans), this protein is NADP-reducing hydrogenase subunit HndC (hndC).